The sequence spans 408 residues: Arginine biosynthesis bifunctional protein ArgJ (408 aa).

Positions 156, 182, 193, 279, 403, and 408 each coordinate substrate. Thr-193 acts as the Nucleophile in catalysis.

The protein belongs to the ArgJ family. Heterotetramer of two alpha and two beta chains.

The protein resides in the cytoplasm. The catalysed reaction is N(2)-acetyl-L-ornithine + L-glutamate = N-acetyl-L-glutamate + L-ornithine. The enzyme catalyses L-glutamate + acetyl-CoA = N-acetyl-L-glutamate + CoA + H(+). It functions in the pathway amino-acid biosynthesis; L-arginine biosynthesis; L-ornithine and N-acetyl-L-glutamate from L-glutamate and N(2)-acetyl-L-ornithine (cyclic): step 1/1. Its pathway is amino-acid biosynthesis; L-arginine biosynthesis; N(2)-acetyl-L-ornithine from L-glutamate: step 1/4. In terms of biological role, catalyzes two activities which are involved in the cyclic version of arginine biosynthesis: the synthesis of N-acetylglutamate from glutamate and acetyl-CoA as the acetyl donor, and of ornithine by transacetylation between N(2)-acetylornithine and glutamate. The sequence is that of Arginine biosynthesis bifunctional protein ArgJ from Bordetella bronchiseptica (strain ATCC BAA-588 / NCTC 13252 / RB50) (Alcaligenes bronchisepticus).